Consider the following 72-residue polypeptide: Translation initiation factor IF-1 (72 aa).

The region spanning 1–72 (MAKEDTLEFP…TKGRINYRFK (72 aa)) is the S1-like domain.

It belongs to the IF-1 family. In terms of assembly, component of the 30S ribosomal translation pre-initiation complex which assembles on the 30S ribosome in the order IF-2 and IF-3, IF-1 and N-formylmethionyl-tRNA(fMet); mRNA recruitment can occur at any time during PIC assembly.

It is found in the cytoplasm. Functionally, one of the essential components for the initiation of protein synthesis. Stabilizes the binding of IF-2 and IF-3 on the 30S subunit to which N-formylmethionyl-tRNA(fMet) subsequently binds. Helps modulate mRNA selection, yielding the 30S pre-initiation complex (PIC). Upon addition of the 50S ribosomal subunit IF-1, IF-2 and IF-3 are released leaving the mature 70S translation initiation complex. This Ruegeria sp. (strain TM1040) (Silicibacter sp.) protein is Translation initiation factor IF-1.